The chain runs to 276 residues: Orotidine 5'-phosphate decarboxylase (276 aa).

Catalysis depends on K96, which acts as the Proton donor.

It belongs to the OMP decarboxylase family. Type 2 subfamily.

It catalyses the reaction orotidine 5'-phosphate + H(+) = UMP + CO2. It functions in the pathway pyrimidine metabolism; UMP biosynthesis via de novo pathway; UMP from orotate: step 2/2. This chain is Orotidine 5'-phosphate decarboxylase, found in Porphyromonas gingivalis (strain ATCC BAA-308 / W83).